A 372-amino-acid polypeptide reads, in one-letter code: Glutamate 5-kinase (372 aa).

Lys14 provides a ligand contact to ATP. Substrate is bound by residues Ser54, Asp141, and Asn153. Residues 173–174 (TD) and 215–221 (TGGMATK) contribute to the ATP site. Residues 280-358 (RGQLVIDAGA…DSIEEVLGYD (79 aa)) enclose the PUA domain.

The protein belongs to the glutamate 5-kinase family.

Its subcellular location is the cytoplasm. The catalysed reaction is L-glutamate + ATP = L-glutamyl 5-phosphate + ADP. It functions in the pathway amino-acid biosynthesis; L-proline biosynthesis; L-glutamate 5-semialdehyde from L-glutamate: step 1/2. Its function is as follows. Catalyzes the transfer of a phosphate group to glutamate to form L-glutamate 5-phosphate. This is Glutamate 5-kinase from Shewanella pealeana (strain ATCC 700345 / ANG-SQ1).